The sequence spans 238 residues: 2,3,4,5-tetrahydropyridine-2,6-dicarboxylate N-acetyltransferase (238 aa).

The protein belongs to the transferase hexapeptide repeat family. DapH subfamily.

The enzyme catalyses (S)-2,3,4,5-tetrahydrodipicolinate + acetyl-CoA + H2O = L-2-acetamido-6-oxoheptanedioate + CoA. It functions in the pathway amino-acid biosynthesis; L-lysine biosynthesis via DAP pathway; LL-2,6-diaminopimelate from (S)-tetrahydrodipicolinate (acetylase route): step 1/3. Its function is as follows. Catalyzes the transfer of an acetyl group from acetyl-CoA to tetrahydrodipicolinate. The polypeptide is 2,3,4,5-tetrahydropyridine-2,6-dicarboxylate N-acetyltransferase (Pseudothermotoga lettingae (strain ATCC BAA-301 / DSM 14385 / NBRC 107922 / TMO) (Thermotoga lettingae)).